Consider the following 208-residue polypeptide: 3-demethoxyubiquinol 3-hydroxylase (208 aa).

Residues glutamate 57, glutamate 87, histidine 90, glutamate 139, glutamate 171, and histidine 174 each contribute to the Fe cation site.

The protein belongs to the COQ7 family. The cofactor is Fe cation.

It is found in the cell membrane. The catalysed reaction is a 5-methoxy-2-methyl-3-(all-trans-polyprenyl)benzene-1,4-diol + AH2 + O2 = a 3-demethylubiquinol + A + H2O. The protein operates within cofactor biosynthesis; ubiquinone biosynthesis. In terms of biological role, catalyzes the hydroxylation of 2-nonaprenyl-3-methyl-6-methoxy-1,4-benzoquinol during ubiquinone biosynthesis. In Janthinobacterium sp. (strain Marseille) (Minibacterium massiliensis), this protein is 3-demethoxyubiquinol 3-hydroxylase.